A 1083-amino-acid chain; its full sequence is Ubiquitin carboxyl-terminal hydrolase 1 (1083 aa).

The segment at 30-165 (RSCVHFDKYV…KKDLLLEVVK (136 aa)) adopts a UBP-type zinc-finger fold. Cys32, His34, Cys56, Cys59, Cys95, Cys98, Cys103, His115, His119, His125, Cys139, and Cys142 together coordinate Zn(2+). The USP domain maps to 202-1083 (RGLVNLGNTC…EAYILFYERI (882 aa)). Catalysis depends on Cys211, which acts as the Nucleophile. Disordered stretches follow at residues 387 to 424 (KDSE…DNET) and 450 to 486 (GSTE…ASGI). Basic and acidic residues-rich tracts occupy residues 409-419 (SDHKIQSRPET) and 455-473 (LMHD…EDVR). Over residues 474 to 485 (ATQSNEETSASG) the composition is skewed to polar residues. The active-site Proton acceptor is the His1029.

This sequence belongs to the peptidase C19 family.

The enzyme catalyses Thiol-dependent hydrolysis of ester, thioester, amide, peptide and isopeptide bonds formed by the C-terminal Gly of ubiquitin (a 76-residue protein attached to proteins as an intracellular targeting signal).. In terms of biological role, recognizes and hydrolyzes the peptide bond at the C-terminal Gly of ubiquitin. Involved in the processing of poly-ubiquitin precursors as well as that of ubiquitinated proteins. Is involved in resistance to the arginine analog canavanine (CAN). This chain is Ubiquitin carboxyl-terminal hydrolase 1 (UBP1), found in Arabidopsis thaliana (Mouse-ear cress).